A 98-amino-acid chain; its full sequence is UPF0473 protein GTNG_2486 (98 aa).

This sequence belongs to the UPF0473 family.

The chain is UPF0473 protein GTNG_2486 from Geobacillus thermodenitrificans (strain NG80-2).